A 209-amino-acid polypeptide reads, in one-letter code: Thiamine-phosphate synthase (209 aa).

4-amino-2-methyl-5-(diphosphooxymethyl)pyrimidine-binding positions include 36–40 and Asn-68; that span reads QYRDK. The Mg(2+) site is built by Asp-69 and Asp-87. Thr-106 contributes to the 4-amino-2-methyl-5-(diphosphooxymethyl)pyrimidine binding site. 133–135 contacts 2-[(2R,5Z)-2-carboxy-4-methylthiazol-5(2H)-ylidene]ethyl phosphate; the sequence is SST. Lys-136 is a binding site for 4-amino-2-methyl-5-(diphosphooxymethyl)pyrimidine. Gly-163 is a 2-[(2R,5Z)-2-carboxy-4-methylthiazol-5(2H)-ylidene]ethyl phosphate binding site.

Belongs to the thiamine-phosphate synthase family. It depends on Mg(2+) as a cofactor.

The enzyme catalyses 2-[(2R,5Z)-2-carboxy-4-methylthiazol-5(2H)-ylidene]ethyl phosphate + 4-amino-2-methyl-5-(diphosphooxymethyl)pyrimidine + 2 H(+) = thiamine phosphate + CO2 + diphosphate. The catalysed reaction is 2-(2-carboxy-4-methylthiazol-5-yl)ethyl phosphate + 4-amino-2-methyl-5-(diphosphooxymethyl)pyrimidine + 2 H(+) = thiamine phosphate + CO2 + diphosphate. It carries out the reaction 4-methyl-5-(2-phosphooxyethyl)-thiazole + 4-amino-2-methyl-5-(diphosphooxymethyl)pyrimidine + H(+) = thiamine phosphate + diphosphate. The protein operates within cofactor biosynthesis; thiamine diphosphate biosynthesis; thiamine phosphate from 4-amino-2-methyl-5-diphosphomethylpyrimidine and 4-methyl-5-(2-phosphoethyl)-thiazole: step 1/1. In terms of biological role, condenses 4-methyl-5-(beta-hydroxyethyl)thiazole monophosphate (THZ-P) and 2-methyl-4-amino-5-hydroxymethyl pyrimidine pyrophosphate (HMP-PP) to form thiamine monophosphate (TMP). This Azotobacter vinelandii (strain DJ / ATCC BAA-1303) protein is Thiamine-phosphate synthase.